A 428-amino-acid polypeptide reads, in one-letter code: Glutamyl-tRNA reductase (428 aa).

Substrate-binding positions include 49-52, Ser-109, 114-116, and Gln-120; these read TCNR and EGQ. The active-site Nucleophile is the Cys-50. 189–194 lines the NADP(+) pocket; sequence GAGKMS.

Belongs to the glutamyl-tRNA reductase family. Homodimer.

It carries out the reaction (S)-4-amino-5-oxopentanoate + tRNA(Glu) + NADP(+) = L-glutamyl-tRNA(Glu) + NADPH + H(+). It functions in the pathway porphyrin-containing compound metabolism; protoporphyrin-IX biosynthesis; 5-aminolevulinate from L-glutamyl-tRNA(Glu): step 1/2. The protein operates within porphyrin-containing compound metabolism; chlorophyll biosynthesis. In terms of biological role, catalyzes the NADPH-dependent reduction of glutamyl-tRNA(Glu) to glutamate 1-semialdehyde (GSA). The sequence is that of Glutamyl-tRNA reductase from Trichormus variabilis (strain ATCC 29413 / PCC 7937) (Anabaena variabilis).